Here is a 143-residue protein sequence, read N- to C-terminus: Small ribosomal subunit protein uS12 (143 aa).

Position 62 is a hydroxyproline (Pro-62).

The protein belongs to the universal ribosomal protein uS12 family.

This Dictyostelium discoideum (Social amoeba) protein is Small ribosomal subunit protein uS12 (rps23).